The sequence spans 260 residues: MKDIQKERDFRNMPIDKVGIKNLKYPIRVLDRKNGCQQTVGTINMYVDLPHESKGTHMSRFVEMLHILQPEISPKTFSVILDQMKKDLDAASAHMEVTFPYFIEKAAPVSGTPGFMEYTCKLMGTSRADGRVDLVSEVVVPISSVCPCSKEISDGGAHNQRGEVRLAIRSKKFVWIEDLIQLVEAAASCELYSVLKRVDEKWVTEKGYQNPKFVEDIVRDVAVALKNDTNITWFNISVENFESIHNHSAYATITCGRINP.

This sequence belongs to the GTP cyclohydrolase IV family.

The catalysed reaction is GTP + H2O = 7,8-dihydroneopterin 3'-triphosphate + formate + H(+). The protein operates within cofactor biosynthesis; 7,8-dihydroneopterin triphosphate biosynthesis; 7,8-dihydroneopterin triphosphate from GTP: step 1/1. Converts GTP to 7,8-dihydroneopterin triphosphate. This chain is GTP cyclohydrolase FolE2, found in Desulfosudis oleivorans (strain DSM 6200 / JCM 39069 / Hxd3) (Desulfococcus oleovorans).